The sequence spans 284 residues: Bifunctional protein FolD (284 aa).

NADP(+) is bound by residues Gly-165–Ser-167, Ser-190, and Val-231.

It belongs to the tetrahydrofolate dehydrogenase/cyclohydrolase family. In terms of assembly, homodimer.

The enzyme catalyses (6R)-5,10-methylene-5,6,7,8-tetrahydrofolate + NADP(+) = (6R)-5,10-methenyltetrahydrofolate + NADPH. It catalyses the reaction (6R)-5,10-methenyltetrahydrofolate + H2O = (6R)-10-formyltetrahydrofolate + H(+). It functions in the pathway one-carbon metabolism; tetrahydrofolate interconversion. Catalyzes the oxidation of 5,10-methylenetetrahydrofolate to 5,10-methenyltetrahydrofolate and then the hydrolysis of 5,10-methenyltetrahydrofolate to 10-formyltetrahydrofolate. The polypeptide is Bifunctional protein FolD (Brevibacillus brevis (strain 47 / JCM 6285 / NBRC 100599)).